Reading from the N-terminus, the 353-residue chain is Histidinol-phosphate aminotransferase (353 aa).

N6-(pyridoxal phosphate)lysine is present on K218.

The protein belongs to the class-II pyridoxal-phosphate-dependent aminotransferase family. Histidinol-phosphate aminotransferase subfamily. As to quaternary structure, homodimer. Pyridoxal 5'-phosphate serves as cofactor.

It carries out the reaction L-histidinol phosphate + 2-oxoglutarate = 3-(imidazol-4-yl)-2-oxopropyl phosphate + L-glutamate. The protein operates within amino-acid biosynthesis; L-histidine biosynthesis; L-histidine from 5-phospho-alpha-D-ribose 1-diphosphate: step 7/9. The polypeptide is Histidinol-phosphate aminotransferase (Synechococcus sp. (strain JA-2-3B'a(2-13)) (Cyanobacteria bacterium Yellowstone B-Prime)).